Reading from the N-terminus, the 428-residue chain is Cysteine--tRNA ligase (428 aa).

Cys-23 provides a ligand contact to Zn(2+). A 'HIGH' region motif is present at residues 25–35 (PTVYNDLHLGN). Zn(2+) is bound by residues Cys-196, His-221, and Glu-225. A 'KMSKS' region motif is present at residues 253 to 257 (KMSKS). Lys-256 provides a ligand contact to ATP.

It belongs to the class-I aminoacyl-tRNA synthetase family. Monomer. The cofactor is Zn(2+).

Its subcellular location is the cytoplasm. It catalyses the reaction tRNA(Cys) + L-cysteine + ATP = L-cysteinyl-tRNA(Cys) + AMP + diphosphate. The protein is Cysteine--tRNA ligase (cysS) of Mycoplasma genitalium (strain ATCC 33530 / DSM 19775 / NCTC 10195 / G37) (Mycoplasmoides genitalium).